Consider the following 440-residue polypeptide: MRLSEHIYRTISSIRGPLLFVERVFNARAGEIVRIVHPDGETVDGEVLKIEGETVLIQVFGETRGLGMDAPVAFTDGVKMAPLSPDMIGRVFDGSFHPIDGSPLFVPERWTPATGQPINPTARARPEEFIETGITAIDALNTLVKGQKLPVFSCAGLPSREVAAAVLQNARLAGGGEFVVVFVALGLTHHDYSFYMESLAEMKTGFVAFVNRADEPVVERLLAPRFGLAAAEFLAFNRGMDVLVLITDMTNYCDALREVSTAREELPGRRGYPGYMYSDLASLYERAGRIKGMAGSVTMLPVVTMPEDDITHPIPDLTGYITEGQIVLSRELHQKGVFPPVDVLPSLSRLMQRGIGAGHTRSDHRAIADRLYRHYAKGRDLRRLEAIVGREGMTAGDRVMLDFADAFERELIHQGSARRDINGSLDRGVELLKRFSLEAA.

This sequence belongs to the ATPase alpha/beta chains family.

In terms of biological role, produces ATP from ADP in the presence of a proton gradient across the membrane. The V-type beta chain is a regulatory subunit. In Geotalea uraniireducens (strain Rf4) (Geobacter uraniireducens), this protein is V-type ATP synthase beta chain.